Here is a 195-residue protein sequence, read N- to C-terminus: uncharacterized protein (195 aa).

A compositionally biased stretch (polar residues) spans 1–11 (MDYIVSPTSSE). The segment at 1–118 (MDYIVSPTSS…LDTEGGFVLS (118 aa)) is disordered. The span at 35–46 (SPEDITDSDEQN) shows a compositional bias: acidic residues. A compositionally biased stretch (low complexity) spans 47-63 (DTTTTTSEMSSTSSVPS). Residues 82-93 (SDSKLIFDSDNK) show a composition bias toward basic and acidic residues. Acidic residues predominate over residues 94-110 (DQDDEDDEDDEELEGLD).

This is an uncharacterized protein from Acanthamoeba polyphaga mimivirus (APMV).